We begin with the raw amino-acid sequence, 367 residues long: Mitochondrial GTPase 1 (367 aa).

Residues Leu42–Pro228 enclose the CP-type G domain. Residues Thr89–Asp92, Asn160–Thr165, and Gly224 contribute to the GTP site.

It belongs to the TRAFAC class YlqF/YawG GTPase family. MTG1 subfamily.

It localises to the mitochondrion inner membrane. Mitochondrial GTPase involved in assembly of the large ribosomal subunit. Plays a role in expression of the mitochondrial translational machinery. In Saccharomyces cerevisiae (strain ATCC 204508 / S288c) (Baker's yeast), this protein is Mitochondrial GTPase 1 (MTG1).